We begin with the raw amino-acid sequence, 183 residues long: MMQICDTYNQKHSLFNAMNRFIGAVNNMDQTVMVPSLLRDVPLADPGLDNDVGVEVGGSGGCLEERTPPVPDSGSANGSFFAPSRDMYSHYVLLKSIRNDIEWGVLHQPPPPAGSEEGSAWKSKDILVDLGHLEGADAGEEDLEQQFHYHLRGLHTVLSKLTRKANILTNRYKQEIGFGNWGH.

Met1 carries the post-translational modification N-acetylmethionine. Residues Ser75 and Ser79 each carry the phosphoserine modification.

The protein belongs to the SPOT14 family. Homodimer in the absence of THRSP. Heterodimer with THRSP. The homodimer interacts with ACACA and ACACB. Promotes polymerization of Acetyl-CoA carboxylase to form complexes that contain MID1IP1 and ACACA and/or ACACB. Interaction with THRSP interferes with ACACA binding.

The protein resides in the nucleus. It is found in the cytoplasm. The protein localises to the cytoskeleton. In terms of biological role, plays a role in the regulation of lipogenesis in liver. Up-regulates ACACA enzyme activity. Required for efficient lipid biosynthesis, including triacylglycerol, diacylglycerol and phospholipid. Involved in stabilization of microtubules. The polypeptide is Mid1-interacting protein 1 (MID1IP1) (Homo sapiens (Human)).